Consider the following 421-residue polypeptide: Aspartokinase (421 aa).

ATP is bound at residue 7-10 (KYGG). 25 to 30 (RIVATK) is a substrate binding site. Position 41 (serine 41) interacts with ATP. Residues 45–49 (DTTDE), glutamate 74, 125–126 (LD), 151–154 (RGGS), and serine 154 each bind substrate. ATP contacts are provided by residues 174 to 175 (SD), 180 to 185 (YTADPR), and lysine 210. ACT domains are found at residues 267–343 (VTVL…YDDQ) and 349–421 (LVGA…GTGR). Residues aspartate 274, 274–279 (DKPGEA), 292–294 (NID), glutamine 298, 360–361 (VT), 374–375 (NV), and 381–382 (SE) contribute to the substrate site.

It belongs to the aspartokinase family. In terms of assembly, tetramer consisting of 2 isoforms Alpha (catalytic and regulation) and of a homodimer of 2 isoforms Beta (regulation).

It carries out the reaction L-aspartate + ATP = 4-phospho-L-aspartate + ADP. The protein operates within amino-acid biosynthesis; L-lysine biosynthesis via DAP pathway; (S)-tetrahydrodipicolinate from L-aspartate: step 1/4. Its pathway is amino-acid biosynthesis; L-methionine biosynthesis via de novo pathway; L-homoserine from L-aspartate: step 1/3. It functions in the pathway amino-acid biosynthesis; L-threonine biosynthesis; L-threonine from L-aspartate: step 1/5. Its function is as follows. Catalyzes the phosphorylation of the beta-carboxyl group of aspartic acid with ATP to yield 4-phospho-L-aspartate, which is involved in the branched biosynthetic pathway leading to the biosynthesis of amino acids lysine, threonine, isoleucine and methionine. This Corynebacterium efficiens (strain DSM 44549 / YS-314 / AJ 12310 / JCM 11189 / NBRC 100395) protein is Aspartokinase (lysC).